The following is a 462-amino-acid chain: Zinc transporter 6-B (462 aa).

Topologically, residues 1–33 (MGTIYLFRKTQRSLLGKLTQEFRLVTADRRSWK) are cytoplasmic. Residues 34–54 (ILLFGAINVVCTGFLLTWCSS) traverse the membrane as a helical segment. Residues 55-64 (TNSMALTAYT) are Extracellular-facing. Residues 65-85 (YLTIFDLFSLITSLISYWVMM) traverse the membrane as a helical segment. Residues 86–98 (KKPSPTYSFGFER) lie on the Cytoplasmic side of the membrane. The helical transmembrane segment at 99–119 (LEVLAVFASTVLAQLGALFIL) threads the bilayer. Residues 120–134 (KESAERFLEQPEIHT) are Extracellular-facing. A helical transmembrane segment spans residues 135–155 (GRLLVGTFVALFFNLFTMLSI). The Cytoplasmic portion of the chain corresponds to 156–200 (RNKPFAYVSEAASTSWLQEHVADLSRSLCGVIPGLSSIFLPRMNP). A helical membrane pass occupies residues 201–221 (FVLIDIAGALALCITYMLIEI). The Extracellular portion of the chain corresponds to 222–223 (NN). Residues 224-244 (YFAVDTASAIAIAVMTFGTMY) traverse the membrane as a helical segment. At 245-462 (PMSVYSGKVL…TPGQFTQFRQ (218 aa)) the chain is on the cytoplasmic side.

This sequence belongs to the cation diffusion facilitator (CDF) transporter (TC 2.A.4) family. SLC30A subfamily. In terms of assembly, heterodimer with SLC30A5; form a functional zinc ion transmembrane transporter.

It localises to the golgi apparatus. Its subcellular location is the trans-Golgi network membrane. Its function is as follows. Has probably no intrinsic transporter activity but together with SLC30A5 forms a functional zinc ion:proton antiporter heterodimer, mediating zinc entry into the lumen of organelles along the secretory pathway. As part of that zinc ion:proton antiporter, contributes to zinc ion homeostasis within the early secretory pathway and regulates the activation and folding of enzymes like alkaline phosphatases and enzymes involved in phosphatidylinositol glycan anchor biosynthesis. This is Zinc transporter 6-B (slc30a6-b) from Xenopus laevis (African clawed frog).